Here is a 33-residue protein sequence, read N- to C-terminus: Brevinin-2E (33 aa).

A disulfide bridge links cysteine 27 with cysteine 33.

Belongs to the frog skin active peptide (FSAP) family. Brevinin subfamily. Expressed by the skin glands.

Its subcellular location is the secreted. Shows antibacterial activity against representative Gram-negative and Gram-positive bacterial species, and hemolytic activity. The polypeptide is Brevinin-2E (Pelophylax lessonae (Pool frog)).